A 313-amino-acid polypeptide reads, in one-letter code: Ribosomal RNA small subunit methyltransferase H (313 aa).

S-adenosyl-L-methionine-binding positions include 35-37 (GGH), Asp55, Phe79, Asp101, and Gln108.

It belongs to the methyltransferase superfamily. RsmH family.

It localises to the cytoplasm. It carries out the reaction cytidine(1402) in 16S rRNA + S-adenosyl-L-methionine = N(4)-methylcytidine(1402) in 16S rRNA + S-adenosyl-L-homocysteine + H(+). Specifically methylates the N4 position of cytidine in position 1402 (C1402) of 16S rRNA. The sequence is that of Ribosomal RNA small subunit methyltransferase H from Salmonella arizonae (strain ATCC BAA-731 / CDC346-86 / RSK2980).